Consider the following 59-residue polypeptide: Toxin TxpA (59 aa).

Residues 7–27 (LMVMIGFANLIGGIMTWVISL) form a helical membrane-spanning segment.

Its subcellular location is the cell membrane. In terms of biological role, toxic component of a type I toxin-antitoxin (TA) system. Overexpression of txpA causes cell lysis; the TxpA protein has been suggested to act on the cell membrane or might possibly block cell wall synthesis. Overexpression in E.coli is not toxic. This chain is Toxin TxpA, found in Bacillus subtilis (strain 168).